Consider the following 702-residue polypeptide: Pseudouridylate synthase PUS7L (702 aa).

Position 79 is a phosphoserine (serine 79). The disordered stretch occupies residues 84-116 (NSEGAADLPGCSDGDRSHQSDSEKENSVNSVTS). Over residues 96–109 (DGDRSHQSDSEKEN) the composition is skewed to basic and acidic residues. Aspartate 339 serves as the catalytic Nucleophile. Positions 424 to 646 (GFVNYYGPQR…PGCYRHIVKH (223 aa)) constitute a TRUD domain.

This sequence belongs to the pseudouridine synthase TruD family.

It carries out the reaction a uridine in mRNA = a pseudouridine in mRNA. Functionally, pseudouridine synthase that catalyzes pseudouridylation of mRNAs. The protein is Pseudouridylate synthase PUS7L of Mus musculus (Mouse).